The sequence spans 490 residues: Betaine aldehyde dehydrogenase (490 aa).

K(+)-binding residues include threonine 26, isoleucine 27, and aspartate 93. Residue 150–152 (GAW) coordinates NAD(+). The Charge relay system role is filled by lysine 162. 176–179 (KPSE) lines the NAD(+) pocket. Residue valine 180 coordinates K(+). 230 to 233 (GTST) lines the NAD(+) pocket. Leucine 246 contacts K(+). Residue glutamate 252 is the Proton acceptor of the active site. Residues glycine 254, cysteine 286, and glutamate 387 each contribute to the NAD(+) site. The active-site Nucleophile is the cysteine 286. Cysteine 286 bears the Cysteine sulfenic acid (-SOH) mark. K(+) contacts are provided by lysine 457 and glycine 460. Glutamate 464 acts as the Charge relay system in catalysis.

The protein belongs to the aldehyde dehydrogenase family. In terms of assembly, dimer of dimers. The cofactor is K(+).

It catalyses the reaction betaine aldehyde + NAD(+) + H2O = glycine betaine + NADH + 2 H(+). The protein operates within amine and polyamine biosynthesis; betaine biosynthesis via choline pathway; betaine from betaine aldehyde: step 1/1. Its function is as follows. Involved in the biosynthesis of the osmoprotectant glycine betaine. Catalyzes the irreversible oxidation of betaine aldehyde to the corresponding acid. The protein is Betaine aldehyde dehydrogenase of Pseudomonas paraeruginosa (strain DSM 24068 / PA7) (Pseudomonas aeruginosa (strain PA7)).